A 360-amino-acid polypeptide reads, in one-letter code: DNA replication and repair protein RecF (360 aa).

30–37 (GRNAQGKT) lines the ATP pocket.

Belongs to the RecF family.

The protein resides in the cytoplasm. Functionally, the RecF protein is involved in DNA metabolism; it is required for DNA replication and normal SOS inducibility. RecF binds preferentially to single-stranded, linear DNA. It also seems to bind ATP. In Desulforudis audaxviator (strain MP104C), this protein is DNA replication and repair protein RecF.